The chain runs to 544 residues: Chaperonin GroEL 2 (544 aa).

ATP-binding positions include 29–32 (TLGP), 86–90 (DGTTT), G413, and D495. The disordered stretch occupies residues 525 to 544 (PEPKSNKPAGGGGGVDDYDY). Residues 533-544 (AGGGGGVDDYDY) are compositionally biased toward gly residues.

Belongs to the chaperonin (HSP60) family. As to quaternary structure, forms a cylinder of 14 subunits composed of two heptameric rings stacked back-to-back. Interacts with the co-chaperonin GroES.

It is found in the cytoplasm. It catalyses the reaction ATP + H2O + a folded polypeptide = ADP + phosphate + an unfolded polypeptide.. Its function is as follows. Together with its co-chaperonin GroES, plays an essential role in assisting protein folding. The GroEL-GroES system forms a nano-cage that allows encapsulation of the non-native substrate proteins and provides a physical environment optimized to promote and accelerate protein folding. The chain is Chaperonin GroEL 2 from Synechococcus sp. (strain JA-3-3Ab) (Cyanobacteria bacterium Yellowstone A-Prime).